Reading from the N-terminus, the 88-residue chain is Small ribosomal subunit protein uS15 (88 aa).

This sequence belongs to the universal ribosomal protein uS15 family. In terms of assembly, part of the 30S ribosomal subunit. Forms a bridge to the 50S subunit in the 70S ribosome, contacting the 23S rRNA.

Its function is as follows. One of the primary rRNA binding proteins, it binds directly to 16S rRNA where it helps nucleate assembly of the platform of the 30S subunit by binding and bridging several RNA helices of the 16S rRNA. Forms an intersubunit bridge (bridge B4) with the 23S rRNA of the 50S subunit in the ribosome. The protein is Small ribosomal subunit protein uS15 of Caldicellulosiruptor saccharolyticus (strain ATCC 43494 / DSM 8903 / Tp8T 6331).